Here is a 229-residue protein sequence, read N- to C-terminus: DNA mismatch repair protein MutH (229 aa).

Belongs to the MutH family.

The protein resides in the cytoplasm. Its function is as follows. Sequence-specific endonuclease that cleaves unmethylated GATC sequences. It is involved in DNA mismatch repair. This chain is DNA mismatch repair protein MutH, found in Escherichia coli O45:K1 (strain S88 / ExPEC).